Reading from the N-terminus, the 264-residue chain is Thymidylate synthase (264 aa).

Position 21 (R21) interacts with dUMP. Residue H51 participates in (6R)-5,10-methylene-5,6,7,8-tetrahydrofolate binding. A dUMP-binding site is contributed by 126-127; sequence RR. Residue C146 is the Nucleophile of the active site. Residues 166-169, N177, and 207-209 contribute to the dUMP site; these read RSAD and HLY. D169 is a (6R)-5,10-methylene-5,6,7,8-tetrahydrofolate binding site. A263 contributes to the (6R)-5,10-methylene-5,6,7,8-tetrahydrofolate binding site.

This sequence belongs to the thymidylate synthase family. Bacterial-type ThyA subfamily. As to quaternary structure, homodimer.

Its subcellular location is the cytoplasm. It carries out the reaction dUMP + (6R)-5,10-methylene-5,6,7,8-tetrahydrofolate = 7,8-dihydrofolate + dTMP. It functions in the pathway pyrimidine metabolism; dTTP biosynthesis. Functionally, catalyzes the reductive methylation of 2'-deoxyuridine-5'-monophosphate (dUMP) to 2'-deoxythymidine-5'-monophosphate (dTMP) while utilizing 5,10-methylenetetrahydrofolate (mTHF) as the methyl donor and reductant in the reaction, yielding dihydrofolate (DHF) as a by-product. This enzymatic reaction provides an intracellular de novo source of dTMP, an essential precursor for DNA biosynthesis. This is Thymidylate synthase from Bdellovibrio bacteriovorus (strain ATCC 15356 / DSM 50701 / NCIMB 9529 / HD100).